Here is an 830-residue protein sequence, read N- to C-terminus: Septin and tuftelin-interacting protein 1 homolog (830 aa).

Residues 1 to 17 (MEDDDGRESFEINDMDL) are compositionally biased toward acidic residues. Disordered regions lie at residues 1 to 122 (MEDD…PKQN) and 196 to 244 (AYGK…KGSW). A G-patch domain is found at 153-199 (NSNKIMKMMQAMGYKPGEGLGAQGQGIVEPVQAQLRKGRGAVGAYGK).

The protein belongs to the TFP11/STIP family. As to quaternary structure, identified in the spliceosome C complex. Can assemble into large rod-like polymers. As to expression, detected in muscle cells from body, pharynx and vulva, in neurons from head and tail, in pharyngeal gland and in tail hypodermal cells.

The protein localises to the nucleus. May be involved in pre-mRNA splicing. Required for embryonic development and survival. This is Septin and tuftelin-interacting protein 1 homolog (stip-1) from Caenorhabditis elegans.